The sequence spans 394 residues: Quinolinate synthase (394 aa).

The iminosuccinate site is built by His67 and Ser84. Cys131 serves as a coordination point for [4Fe-4S] cluster. Iminosuccinate contacts are provided by residues 163–165 and Ser184; that span reads YMN. Residue Cys254 participates in [4Fe-4S] cluster binding. Iminosuccinate is bound by residues 280–282 and Thr297; that span reads HPE. Residue Cys346 coordinates [4Fe-4S] cluster.

It belongs to the quinolinate synthase family. Type 3 subfamily. Requires [4Fe-4S] cluster as cofactor.

It is found in the cytoplasm. The enzyme catalyses iminosuccinate + dihydroxyacetone phosphate = quinolinate + phosphate + 2 H2O + H(+). Its pathway is cofactor biosynthesis; NAD(+) biosynthesis; quinolinate from iminoaspartate: step 1/1. Its function is as follows. Catalyzes the condensation of iminoaspartate with dihydroxyacetone phosphate to form quinolinate. The chain is Quinolinate synthase from Streptomyces coelicolor (strain ATCC BAA-471 / A3(2) / M145).